A 225-amino-acid chain; its full sequence is 7-cyano-7-deazaguanine synthase (225 aa).

9–19 (YSGGLDSTTCL) provides a ligand contact to ATP. Residues Cys188, Cys198, Cys201, and Cys204 each coordinate Zn(2+).

It belongs to the QueC family. The cofactor is Zn(2+).

It carries out the reaction 7-carboxy-7-deazaguanine + NH4(+) + ATP = 7-cyano-7-deazaguanine + ADP + phosphate + H2O + H(+). It participates in purine metabolism; 7-cyano-7-deazaguanine biosynthesis. Catalyzes the ATP-dependent conversion of 7-carboxy-7-deazaguanine (CDG) to 7-cyano-7-deazaguanine (preQ(0)). This Geobacter sp. (strain M21) protein is 7-cyano-7-deazaguanine synthase.